Here is a 396-residue protein sequence, read N- to C-terminus: L-lactate dehydrogenase (396 aa).

An FMN hydroxy acid dehydrogenase domain is found at 1–380 (MIISAASDYR…SGDSLVQELG (380 aa)). A substrate-binding site is contributed by tyrosine 24. FMN contacts are provided by serine 106 and glutamine 127. Tyrosine 129 contacts substrate. FMN is bound at residue threonine 155. Residue arginine 164 participates in substrate binding. An FMN-binding site is contributed by lysine 251. The active-site Proton acceptor is the histidine 275. Arginine 278 lines the substrate pocket. Residue 306–330 (DSGIRNGLDVVRMIALGADTVLLGR) participates in FMN binding.

Belongs to the FMN-dependent alpha-hydroxy acid dehydrogenase family. The cofactor is FMN.

It localises to the cell inner membrane. It catalyses the reaction (S)-lactate + A = pyruvate + AH2. Its function is as follows. Catalyzes the conversion of L-lactate to pyruvate. Is coupled to the respiratory chain. In Salmonella enteritidis PT4 (strain P125109), this protein is L-lactate dehydrogenase.